We begin with the raw amino-acid sequence, 304 residues long: uncharacterized protein (304 aa).

Coiled-coil stretches lie at residues 3–35 (KNQYISQNMENKEIENKEIENKKTDSKEFDKEI) and 89–132 (KSNK…NSNL). The disordered stretch occupies residues 96–121 (LQNKQQENSEEKNSEEKNSEEKNSEE).

This is an uncharacterized protein from Acanthamoeba polyphaga (Amoeba).